The primary structure comprises 83 residues: MARLMMTVGCLIFIVVLLDMMVPVSNTCPGYFGECGDGPEEGECCGMYNYCCKGRCLMLASCQKRRDAGRLLRSLKKLKLTTH.

An N-terminal signal peptide occupies residues 1 to 27; the sequence is MARLMMTVGCLIFIVVLLDMMVPVSNT.

This sequence belongs to the conopeptide I2-like superfamily. Post-translationally, contains 4 disulfide bonds. As to expression, expressed by the venom duct.

The protein resides in the secreted. Its function is as follows. Acts as a neurotoxin by inhibiting voltage-gated potassium channels (Kv). This chain is Turripeptide Lol11.2, found in Iotyrris olangoensis (Sea snail).